The chain runs to 335 residues: Probable BOI-related E3 ubiquitin-protein ligase 3 (335 aa).

The segment at 196 to 232 (LEEKVKSLCVENQIWRDVAQSNEATVNALRSNLQQVL) is WRD domain. The RING-type zinc-finger motif lies at 287–322 (CRSCGKGEASVLLLPCRHMCLCSVCGSSLNTCPICK).

In terms of assembly, interacts with the DELLA proteins GAI, RGA, RGL1, RGL2 and RGL3.

It catalyses the reaction S-ubiquitinyl-[E2 ubiquitin-conjugating enzyme]-L-cysteine + [acceptor protein]-L-lysine = [E2 ubiquitin-conjugating enzyme]-L-cysteine + N(6)-ubiquitinyl-[acceptor protein]-L-lysine.. The protein operates within protein degradation; proteasomal ubiquitin-dependent pathway. Probable E3 ubiquitin-protein ligase. Has no effect on the stability of the DELLA proteins. This is Probable BOI-related E3 ubiquitin-protein ligase 3 (BRG3) from Arabidopsis thaliana (Mouse-ear cress).